We begin with the raw amino-acid sequence, 290 residues long: Cilia- and flagella-associated protein 298 (290 aa).

This sequence belongs to the CFAP298 family. In terms of assembly, interacts with ZMYND10. In terms of tissue distribution, expressed in the trachea (at protein level).

It is found in the cytoplasm. The protein localises to the cytoskeleton. It localises to the cilium basal body. Functionally, plays a role in motile cilium function, possibly by acting on outer dynein arm assembly. Seems to be important for initiation rather than maintenance of cilium motility. Required for correct positioning of cilia at the apical cell surface, suggesting an additional role in the planar cell polarity (PCP) pathway. May suppress canonical Wnt signaling activity. This is Cilia- and flagella-associated protein 298 from Rattus norvegicus (Rat).